A 382-amino-acid chain; its full sequence is Adaptive-response sensory kinase SasA (382 aa).

Positions 160-382 (MLAHDLRSPL…CFHFTLPVYR (223 aa)) constitute a Histidine kinase domain. H163 is modified (phosphohistidine; by autocatalysis).

Homooligomerizes. Interacts with KaiC. Participates in the KaiABC clock complex, whose core is composed of a KaiC homohexamer, 6 KaiB and up to 6 KaiA dimers. SasA and KaiB(fs) compete to bind to KaiC.

The catalysed reaction is ATP + protein L-histidine = ADP + protein N-phospho-L-histidine.. Functionally, member of the two-component regulatory system SasA/RpaA involved in genome-wide circadian gene expression. One of several clock output pathways. Participates in the Kai clock protein complex, the main circadian regulator in cyanobacteria, via its interaction with KaiC. KaiC enhances the autophosphorylation activity of SasA, which then transfers its phosphate group to RpaA to activate it. In addition to its output function, recruits fold-shifted KaiB (KaiB(fs)) to KaiC to cooperatively form the KaiB(6):KaiC(6) complex (independent of SasA kinase activity). Required for robustness of the circadian rhythm of gene expression and is involved in clock output, also required for adaptation to light/dark cycles. The sequence is that of Adaptive-response sensory kinase SasA from Crocosphaera subtropica (strain ATCC 51142 / BH68) (Cyanothece sp. (strain ATCC 51142)).